Reading from the N-terminus, the 299-residue chain is Undecaprenyl-diphosphatase (299 aa).

The next 8 helical transmembrane spans lie at 10–32 (LFSL…RNLV), 63–83 (PGVS…IAYF), 112–132 (LAIA…KLFW), 143–163 (LPSI…AESF), 178–198 (GFVV…RSGS), 213–233 (AARF…LVEL), 243–263 (GGVL…WLAI), and 276–296 (WIFV…WLSG).

The protein belongs to the UppP family.

It is found in the cell inner membrane. The enzyme catalyses di-trans,octa-cis-undecaprenyl diphosphate + H2O = di-trans,octa-cis-undecaprenyl phosphate + phosphate + H(+). In terms of biological role, catalyzes the dephosphorylation of undecaprenyl diphosphate (UPP). Confers resistance to bacitracin. This is Undecaprenyl-diphosphatase from Prochlorococcus marinus (strain MIT 9313).